The following is a 130-amino-acid chain: Protein ApaG (130 aa).

In terms of domain architecture, ApaG spans 3 to 127 (RAITRNIQVT…FSLDVPDVRR (125 aa)).

The protein is Protein ApaG of Xanthobacter autotrophicus (strain ATCC BAA-1158 / Py2).